The following is a 599-amino-acid chain: Exocyst complex component EXO70B2 (599 aa).

The segment at 38–58 (GASGNRGGDPRPTPSRGGSNV) is disordered.

This sequence belongs to the EXO70 family. Self interacts. Interacts with EXO70B1. Interacts with the exocyst subunits EXO70H1, SEC5A and SEC15B. Binds to SNAP33. Subunit of the exocyst complex that mediates vesicle tethering during exocytosis. Binds to PUB22. In terms of processing, target of the E3 ubiquitin-protein ligase PUB22 that mediates its ubiquitination and degradation via the 26S proteasome to attenuate pathogen-associated molecular patterns (PAMP)-induced signaling, especially is response to the bacterial elicitor flg22. In terms of tissue distribution, mostly expressed in leaves and, to a lower extent, in roots, cotyledons, internodes, flower buds, siliques and anthers.

It is found in the cytoplasmic vesicle. The protein localises to the phagosome. It localises to the cytoplasm. The protein resides in the nucleus. Functionally, component of an exocyst subcomplex specifically involved in autophagy-related, Golgi-independent membrane traffic to the vacuole. Regulates autophagosome formation and autophagy-related Golgi-independent import into the vacuole. Positive regulator of defense responses to pathogenic bacteria (e.g. P.syringae pv. maculicola), to the biotrophic oomycete H.arabidopsidis and to fungi (e.g. B.graminis hordei), especially in cell wall apposition formation related to plant defense. Required for both immediate and later responses triggered by pathogen-associated molecular patterns (PAMPs). Positive regulator of abscisic acid (ABA)-independent mannitol (drought)-promoted stomatal closure. The chain is Exocyst complex component EXO70B2 from Arabidopsis thaliana (Mouse-ear cress).